The chain runs to 111 residues: Inner membrane protein YdgC (111 aa).

Over 1–26 (MGLVIKAALGALVVLLIGVLAKTKNY) the chain is Cytoplasmic. The helical transmembrane segment at 27-47 (YIAGLIPLFPTFALIAHYIVA) threads the bilayer. At 48-58 (SERGIEALRAT) the chain is on the periplasmic side. A helical membrane pass occupies residues 59 to 79 (IIFSMWSIIPYFVYLVSLWYF). The Cytoplasmic segment spans residues 80–87 (TGMMRLPA). Residues 88–108 (AFVGSVACWGISAWVLIICWI) traverse the membrane as a helical segment. At 109–111 (KLH) the chain is on the periplasmic side.

To P.aeruginosa GlpM.

The protein localises to the cell inner membrane. The chain is Inner membrane protein YdgC (ydgC) from Escherichia coli O157:H7.